The following is a 512-amino-acid chain: Oryzalexin E synthase (512 aa).

The chain crosses the membrane as a helical span at residues 6 to 26; that stretch reads SELWMTAVATCMSLLLYLTIL. Residue cysteine 452 coordinates heme.

This sequence belongs to the cytochrome P450 family. Heme is required as a cofactor.

The protein resides in the membrane. The catalysed reaction is ent-sandaracopimaradien-3beta-ol + reduced [NADPH--hemoprotein reductase] + O2 = oryzalexin E + oxidized [NADPH--hemoprotein reductase] + H2O + H(+). Functionally, enzyme of the diterpenoid metabolism involved in the biosynthesis of the oryzalexin class of phytoalexins. Can use ent-sandaracopimaradien and syn-stemodene as substrates, but no activity with syn-stemoden-19-oic acid. Hydroxylates 3-alpha-hydroxy-ent-sandaracopimaradiene at C-9-beta, resulting in a 3-alpha,9-beta-diol corresponding to oryzalexins E. This is Oryzalexin E synthase from Oryza sativa subsp. japonica (Rice).